We begin with the raw amino-acid sequence, 634 residues long: Chaperone protein HtpG (634 aa).

The segment at 1-342 (MTVDTDKQTL…SADLSLNVSR (342 aa)) is a; substrate-binding. The b stretch occupies residues 343 to 559 (EILQSGPVVD…QGDLGLQMRQ (217 aa)). The tract at residues 560 to 634 (LLEASGQAVP…LNKLLLELSA (75 aa)) is c.

Belongs to the heat shock protein 90 family. As to quaternary structure, homodimer.

It localises to the cytoplasm. Its function is as follows. Molecular chaperone. Has ATPase activity. The sequence is that of Chaperone protein HtpG from Xanthomonas campestris pv. campestris (strain ATCC 33913 / DSM 3586 / NCPPB 528 / LMG 568 / P 25).